A 119-amino-acid chain; its full sequence is Circadian clock oscillator protein KaiB (119 aa).

This sequence belongs to the KaiB family. As to quaternary structure, may undergo a major conformational rearrangment; in the free state forms homooligomers. When bound to KaiC switches to a monomeric thioredoxin-fold (KaiB(fs)). The active oscillator complex is probably KaiC(6):KaiB(6).

In terms of biological role, component of the KaiBC clock protein complex, which constitutes the main circadian regulator in cyanobacteria; it may modify the ATPase activity of KaiC. Its function is as follows. May be a metamorphic protein which reversibly switches between an inactive tetrameric fold and a rare, thioredoxin-like monomeric fold (KaiB(fs)). KaiB(fs) binds phospho-KaiC, and perhaps clock output effectors. In Prochlorococcus marinus (strain MIT 9313), this protein is Circadian clock oscillator protein KaiB.